The primary structure comprises 81 residues: Photosystem I iron-sulfur center (81 aa).

2 consecutive 4Fe-4S ferredoxin-type domains span residues 2–31 (AHSV…MVPW) and 39–68 (IASA…VRVY). The [4Fe-4S] cluster site is built by Cys-11, Cys-14, Cys-17, Cys-21, Cys-48, Cys-51, Cys-54, and Cys-58.

The eukaryotic PSI reaction center is composed of at least 11 subunits. [4Fe-4S] cluster serves as cofactor.

The protein localises to the plastid. The protein resides in the chloroplast thylakoid membrane. The enzyme catalyses reduced [plastocyanin] + hnu + oxidized [2Fe-2S]-[ferredoxin] = oxidized [plastocyanin] + reduced [2Fe-2S]-[ferredoxin]. Apoprotein for the two 4Fe-4S centers FA and FB of photosystem I (PSI); essential for photochemical activity. FB is the terminal electron acceptor of PSI, donating electrons to ferredoxin. The C-terminus interacts with PsaA/B/D and helps assemble the protein into the PSI complex. Required for binding of PsaD and PsaE to PSI. PSI is a plastocyanin/cytochrome c6-ferredoxin oxidoreductase, converting photonic excitation into a charge separation, which transfers an electron from the donor P700 chlorophyll pair to the spectroscopically characterized acceptors A0, A1, FX, FA and FB in turn. The sequence is that of Photosystem I iron-sulfur center from Pyropia yezoensis (Susabi-nori).